The chain runs to 431 residues: UDP-N-acetylglucosamine 1-carboxyvinyltransferase (431 aa).

24-25 (KN) lines the phosphoenolpyruvate pocket. Position 95 (arginine 95) interacts with UDP-N-acetyl-alpha-D-glucosamine. Aspartate 119 (proton donor) is an active-site residue. UDP-N-acetyl-alpha-D-glucosamine-binding residues include aspartate 314 and methionine 336.

It belongs to the EPSP synthase family. MurA subfamily.

It localises to the cytoplasm. The enzyme catalyses phosphoenolpyruvate + UDP-N-acetyl-alpha-D-glucosamine = UDP-N-acetyl-3-O-(1-carboxyvinyl)-alpha-D-glucosamine + phosphate. It functions in the pathway cell wall biogenesis; peptidoglycan biosynthesis. Cell wall formation. Adds enolpyruvyl to UDP-N-acetylglucosamine. The chain is UDP-N-acetylglucosamine 1-carboxyvinyltransferase from Bradyrhizobium diazoefficiens (strain JCM 10833 / BCRC 13528 / IAM 13628 / NBRC 14792 / USDA 110).